A 471-amino-acid polypeptide reads, in one-letter code: 3-isopropylmalate dehydratase large subunit (471 aa).

[4Fe-4S] cluster-binding residues include C347, C407, and C410.

The protein belongs to the aconitase/IPM isomerase family. LeuC type 1 subfamily. As to quaternary structure, heterodimer of LeuC and LeuD. [4Fe-4S] cluster serves as cofactor.

The catalysed reaction is (2R,3S)-3-isopropylmalate = (2S)-2-isopropylmalate. Its pathway is amino-acid biosynthesis; L-leucine biosynthesis; L-leucine from 3-methyl-2-oxobutanoate: step 2/4. Functionally, catalyzes the isomerization between 2-isopropylmalate and 3-isopropylmalate, via the formation of 2-isopropylmaleate. The sequence is that of 3-isopropylmalate dehydratase large subunit from Anoxybacillus flavithermus (strain DSM 21510 / WK1).